We begin with the raw amino-acid sequence, 185 residues long: Small ribosomal subunit protein uS4 (185 aa).

The region spanning 108 to 170 is the S4 RNA-binding domain; sequence RRLQTLVYRK…GKSPFVDASH (63 aa).

Belongs to the universal ribosomal protein uS4 family. In terms of assembly, part of the 30S ribosomal subunit. Contacts protein S5. The interaction surface between S4 and S5 is involved in control of translational fidelity.

In terms of biological role, one of the primary rRNA binding proteins, it binds directly to 16S rRNA where it nucleates assembly of the body of the 30S subunit. With S5 and S12 plays an important role in translational accuracy. This is Small ribosomal subunit protein uS4 from Methanoregula boonei (strain DSM 21154 / JCM 14090 / 6A8).